We begin with the raw amino-acid sequence, 206 residues long: 2,3-bisphosphoglycerate-dependent phosphoglycerate mutase (206 aa).

Residues 9–16 (RHGQSEWN), 22–23 (TG), R61, 88–91 (ERNY), K99, 115–116 (RR), and 159–160 (GN) contribute to the substrate site. H10 (tele-phosphohistidine intermediate) is an active-site residue. E88 serves as the catalytic Proton donor/acceptor.

The protein belongs to the phosphoglycerate mutase family. BPG-dependent PGAM subfamily. As to quaternary structure, homodimer.

It carries out the reaction (2R)-2-phosphoglycerate = (2R)-3-phosphoglycerate. The protein operates within carbohydrate degradation; glycolysis; pyruvate from D-glyceraldehyde 3-phosphate: step 3/5. In terms of biological role, catalyzes the interconversion of 2-phosphoglycerate and 3-phosphoglycerate. The sequence is that of 2,3-bisphosphoglycerate-dependent phosphoglycerate mutase from Bartonella henselae (strain ATCC 49882 / DSM 28221 / CCUG 30454 / Houston 1) (Rochalimaea henselae).